Here is a 356-residue protein sequence, read N- to C-terminus: Histidinol-phosphate aminotransferase (356 aa).

Lysine 214 carries the post-translational modification N6-(pyridoxal phosphate)lysine.

This sequence belongs to the class-II pyridoxal-phosphate-dependent aminotransferase family. Histidinol-phosphate aminotransferase subfamily. As to quaternary structure, homodimer. Requires pyridoxal 5'-phosphate as cofactor.

It carries out the reaction L-histidinol phosphate + 2-oxoglutarate = 3-(imidazol-4-yl)-2-oxopropyl phosphate + L-glutamate. It participates in amino-acid biosynthesis; L-histidine biosynthesis; L-histidine from 5-phospho-alpha-D-ribose 1-diphosphate: step 7/9. The polypeptide is Histidinol-phosphate aminotransferase (Shigella boydii serotype 4 (strain Sb227)).